Consider the following 305-residue polypeptide: Ribonucleoside-diphosphate reductase small subunit (305 aa).

3 residues coordinate Fe cation: Glu64, Glu94, and His97. The active site involves Tyr101. The chain crosses the membrane as a helical span at residues 150 to 170 (VLIFYLIEGVFFISSFYCIGL). Fe cation is bound by residues Glu157, Glu191, and His194.

It belongs to the ribonucleoside diphosphate reductase small chain family. Heterotetramer composed of a homodimer of the large subunit (R1) and a homodimer of the small subunit (R2). Larger multisubunit protein complex are also active, composed of (R1)n(R2)n. Requires Fe cation as cofactor.

Its subcellular location is the host membrane. It carries out the reaction a 2'-deoxyribonucleoside 5'-diphosphate + [thioredoxin]-disulfide + H2O = a ribonucleoside 5'-diphosphate + [thioredoxin]-dithiol. Functionally, ribonucleoside-diphosphate reductase holoenzyme provides the precursors necessary for viral DNA synthesis. Allows virus growth in non-dividing cells, as well as reactivation from latency in infected hosts. Catalyzes the biosynthesis of deoxyribonucleotides from the corresponding ribonucleotides. The chain is Ribonucleoside-diphosphate reductase small subunit from Alcelaphine herpesvirus 1 (strain C500) (AlHV-1).